A 255-amino-acid polypeptide reads, in one-letter code: MKFLLVVLGFIGFLKDGITVGGESMLRGVYQDKFYQGTYPQNKNDNWLARATLIGKGGWSNFKFLFLSPGGELYGVLNDKIYKGTPPTHDNDNWMGRAKKIGNGGWNQFQFLFFDPNGYLYAVSKDKLYKASPPQSDTDNWIARATEIGSGGWSGFKFLFFHPNGYLYAVHGQQFYKALPPVSNQDNWLARATKIGQGGWDTFKFLFFSSVGTLFGVQGGKFYEDYPPSYAHDNWLARAKLIGNGGWDDFRFLFF.

Residues 1-19 (MKFLLVVLGFIGFLKDGIT) form the signal peptide. WD repeat units lie at residues 20–67 (VGGE…FLFL), 68–114 (SPGG…FLFF), 115–161 (DPNG…FLFF), 162–208 (HPNG…FLFF), and 209–255 (SSVG…FLFF).

As to quaternary structure, monomer.

The protein localises to the secreted. The protein resides in the cytoplasmic granule. In terms of biological role, lectin that binds specifically to N-acetylglucosamine and N-acetylgalactosamine. Is part of the innate immunity host defense system of the horseshoe crab. The protein is Tachylectin-2 of Tachypleus tridentatus (Japanese horseshoe crab).